Reading from the N-terminus, the 247-residue chain is Segregation and condensation protein A (247 aa).

It belongs to the ScpA family. In terms of assembly, component of a cohesin-like complex composed of ScpA, ScpB and the Smc homodimer, in which ScpA and ScpB bind to the head domain of Smc. The presence of the three proteins is required for the association of the complex with DNA.

The protein localises to the cytoplasm. Its function is as follows. Participates in chromosomal partition during cell division. May act via the formation of a condensin-like complex containing Smc and ScpB that pull DNA away from mid-cell into both cell halves. This chain is Segregation and condensation protein A, found in Lactobacillus gasseri (strain ATCC 33323 / DSM 20243 / BCRC 14619 / CIP 102991 / JCM 1131 / KCTC 3163 / NCIMB 11718 / NCTC 13722 / AM63).